The primary structure comprises 79 residues: MSLEVFEKLEAKVQQAIDTITLLQMEIEELKEKNNSLSQEVQNAQHQREELERENNHLKEQQNGWQERLQALLGRMEEV.

Residues 3–79 (LEVFEKLEAK…QALLGRMEEV (77 aa)) are a coiled coil. The residue at position 8 (K8) is an N6-acetyllysine. Residues 34–65 (NNSLSQEVQNAQHQREELERENNHLKEQQNGW) are disordered. Polar residues predominate over residues 35–45 (NSLSQEVQNAQ). Residues 46–60 (HQREELERENNHLKE) are compositionally biased toward basic and acidic residues.

Belongs to the ZapB family. Homodimer. The ends of the coiled-coil dimer bind to each other, forming polymers. Interacts with FtsZ.

The protein localises to the cytoplasm. In terms of biological role, non-essential, abundant cell division factor that is required for proper Z-ring formation. It is recruited early to the divisome by direct interaction with FtsZ, stimulating Z-ring assembly and thereby promoting cell division earlier in the cell cycle. Its recruitment to the Z-ring requires functional FtsA or ZipA. In Shigella boydii serotype 18 (strain CDC 3083-94 / BS512), this protein is Cell division protein ZapB.